Reading from the N-terminus, the 539-residue chain is Netrin-G1 (539 aa).

The N-terminal stretch at 1–18 (MYLSRFLSIHALWVTVSS) is a signal peptide. Disulfide bonds link cysteine 33/cysteine 50, cysteine 72/cysteine 92, and cysteine 80/cysteine 88. One can recognise a Laminin N-terminal domain in the interval 46-296 (DYTACQPEST…AISDIKVRGR (251 aa)). The tract at residues 80–91 (CAMGNPYMCNNE) is NGL discriminant loop I. The N-linked (GlcNAc...) asparagine glycan is linked to asparagine 133. Cysteine 182 and cysteine 206 form a disulfide bridge. Residues 208–214 (EEYSTGY) form an NGL discriminant loop II region. Positions 273–275 (EIF) are NGL discriminant loop III. 13 cysteine pairs are disulfide-bonded: cysteine 297/cysteine 306, cysteine 299/cysteine 315, cysteine 317/cysteine 326, cysteine 329/cysteine 354, cysteine 364/cysteine 373, cysteine 366/cysteine 384, cysteine 387/cysteine 396, cysteine 399/cysteine 417, cysteine 420/cysteine 432, cysteine 422/cysteine 438, cysteine 440/cysteine 449, cysteine 452/cysteine 462, and cysteine 488/cysteine 497. Laminin EGF-like domains follow at residues 297–356 (CKCN…TCIP), 364–419 (CECF…VCIE), and 420–469 (CYCN…VCDN). N-linked (GlcNAc...) asparagine glycosylation is present at asparagine 320. Residue asparagine 406 is glycosylated (N-linked (GlcNAc...) asparagine). N-linked (GlcNAc...) asparagine glycosylation occurs at asparagine 433. Residue serine 510 is the site of GPI-anchor amidated serine attachment. Residues 511 to 539 (ESGQGAPPRGSPALLLLTMLLGTAGPLVF) constitute a propeptide, removed in mature form.

N-glycosylated. In terms of tissue distribution, expression is restricted primarily to neurons of the CNS, particularly in the dorsal thalamus, olfactory bulb and inferior colliculus. Isoform 1A and isoform 1D are the major products in adult brain.

Its subcellular location is the cell membrane. In terms of biological role, involved in controlling patterning and neuronal circuit formation at the laminar, cellular, subcellular and synaptic levels. Promotes neurite outgrowth of both axons and dendrites. In Mus musculus (Mouse), this protein is Netrin-G1 (Ntng1).